Here is a 224-residue protein sequence, read N- to C-terminus: Ribonuclease 3 (224 aa).

Residues 5 to 127 (ANRLQRRLGY…IIGAIYLDSD (123 aa)) enclose the RNase III domain. E40 contributes to the Mg(2+) binding site. Residue D44 is part of the active site. Residues D113 and E116 each coordinate Mg(2+). Residue E116 is part of the active site. The 71-residue stretch at 154-224 (DPKTRLQECL…AELALKQLES (71 aa)) folds into the DRBM domain.

It belongs to the ribonuclease III family. In terms of assembly, homodimer. Mg(2+) is required as a cofactor.

The protein localises to the cytoplasm. The enzyme catalyses Endonucleolytic cleavage to 5'-phosphomonoester.. Digests double-stranded RNA. Involved in the processing of primary rRNA transcript to yield the immediate precursors to the large and small rRNAs (23S and 16S). Processes some mRNAs, and tRNAs when they are encoded in the rRNA operon. Processes pre-crRNA and tracrRNA of type II CRISPR loci if present in the organism. The protein is Ribonuclease 3 of Photobacterium profundum (strain SS9).